The chain runs to 76 residues: Defensin-like protein 71 (76 aa).

An N-terminal signal peptide occupies residues 1-22 (MAMTQVFVIFILLATSLCNSNA). Disulfide bonds link cysteine 36–cysteine 74, cysteine 40–cysteine 63, cysteine 49–cysteine 72, and cysteine 53–cysteine 73.

Belongs to the DEFL family.

It localises to the secreted. The chain is Defensin-like protein 71 (LCR84) from Arabidopsis thaliana (Mouse-ear cress).